The following is a 392-amino-acid chain: Digeranylgeranylglycerophospholipid reductase (392 aa).

Residues Gly-15, Glu-34, Cys-45, Ala-46, Gly-48, Arg-99, Ala-123, Asp-279, Gly-291, and Ile-292 each contribute to the FAD site. Val-370 contacts a 2,3-bis-O-(geranylgeranyl)-sn-glycerol 1-phospholipid.

Belongs to the geranylgeranyl reductase family. DGGGPL reductase subfamily. It depends on FAD as a cofactor.

The catalysed reaction is a 2,3-bis-O-phytanyl-sn-glycerol 1-phospholipid + 8 oxidized 2[4Fe-4S]-[ferredoxin] = a 2,3-bis-O-(geranylgeranyl)-sn-glycerol 1-phospholipid + 8 reduced 2[4Fe-4S]-[ferredoxin] + 16 H(+). It carries out the reaction 2,3-bis-O-(phytanyl)-sn-glycerol 1-phosphate + 8 oxidized 2[4Fe-4S]-[ferredoxin] = 2,3-bis-O-(geranylgeranyl)-sn-glycerol 1-phosphate + 8 reduced 2[4Fe-4S]-[ferredoxin] + 16 H(+). The enzyme catalyses a 2,3-bis-O-phytanyl-sn-glycerol 1-phospholipid + 8 A = a 2,3-bis-O-(geranylgeranyl)-sn-glycerol 1-phospholipid + 8 AH2. It catalyses the reaction CDP-2,3-bis-O-(geranylgeranyl)-sn-glycerol + 8 AH2 = CDP-2,3-bis-O-(phytanyl)-sn-glycerol + 8 A. The catalysed reaction is archaetidylserine + 8 AH2 = 2,3-bis-O-phytanyl-sn-glycero-3-phospho-L-serine + 8 A. It functions in the pathway membrane lipid metabolism; glycerophospholipid metabolism. In terms of biological role, is involved in the reduction of 2,3-digeranylgeranylglycerophospholipids (unsaturated archaeols) into 2,3-diphytanylglycerophospholipids (saturated archaeols) in the biosynthesis of archaeal membrane lipids. Catalyzes the formation of archaetidic acid (2,3-di-O-phytanyl-sn-glyceryl phosphate) from 2,3-di-O-geranylgeranylglyceryl phosphate (DGGGP) via the hydrogenation of each double bond of the isoprenoid chains. Is also probably able to reduce double bonds of geranyl groups in CDP-2,3-bis-O-(geranylgeranyl)-sn-glycerol and archaetidylserine, thus acting at various stages in the biosynthesis of archaeal membrane lipids. This is Digeranylgeranylglycerophospholipid reductase from Methanocella arvoryzae (strain DSM 22066 / NBRC 105507 / MRE50).